The chain runs to 416 residues: Serine hydroxymethyltransferase 1 (416 aa).

(6S)-5,6,7,8-tetrahydrofolate is bound by residues Leu-121 and 125-127 (GHL). Lys-229 is subject to N6-(pyridoxal phosphate)lysine. Residues Glu-245 and 354–356 (SPF) each bind (6S)-5,6,7,8-tetrahydrofolate.

It belongs to the SHMT family. As to quaternary structure, homodimer. Pyridoxal 5'-phosphate is required as a cofactor.

It is found in the cytoplasm. The catalysed reaction is (6R)-5,10-methylene-5,6,7,8-tetrahydrofolate + glycine + H2O = (6S)-5,6,7,8-tetrahydrofolate + L-serine. Its pathway is one-carbon metabolism; tetrahydrofolate interconversion. The protein operates within amino-acid biosynthesis; glycine biosynthesis; glycine from L-serine: step 1/1. Its function is as follows. Catalyzes the reversible interconversion of serine and glycine with tetrahydrofolate (THF) serving as the one-carbon carrier. This reaction serves as the major source of one-carbon groups required for the biosynthesis of purines, thymidylate, methionine, and other important biomolecules. Also exhibits THF-independent aldolase activity toward beta-hydroxyamino acids, producing glycine and aldehydes, via a retro-aldol mechanism. The chain is Serine hydroxymethyltransferase 1 from Photobacterium profundum (strain SS9).